The chain runs to 359 residues: Magnesium transporter NIPA2 (359 aa).

Residues Met1–Asp9 lie on the Extracellular side of the membrane. Residues Phe10–Leu30 traverse the membrane as a helical segment. Residues Lys31–Glu56 are Cytoplasmic-facing. A helical membrane pass occupies residues Trp57–Tyr77. Ala78 is a topological domain (extracellular). Residues Phe79–Leu99 form a helical membrane-spanning segment. Topologically, residues Ser100–Arg107 are cytoplasmic. A helical transmembrane segment spans residues Leu108 to Ile128. The Extracellular portion of the chain corresponds to His129–Pro149. Residues Gly150–Gly170 form a helical membrane-spanning segment. The Cytoplasmic portion of the chain corresponds to Pro171–Gln175. Residues Thr176–Val196 form a helical membrane-spanning segment. Topologically, residues Lys197 to His215 are extracellular. A helical transmembrane segment spans residues Pro216–Leu236. At Asn237–Ser246 the chain is on the cytoplasmic side. The helical transmembrane segment at Ile247 to Leu267 threads the bilayer. Topologically, residues Phe268–Asp278 are extracellular. A helical transmembrane segment spans residues Val279–Phe299. Residues Lys300–Phe359 are Cytoplasmic-facing.

It belongs to the NIPA family. As to expression, widely expressed. Expressed at high levels in the kidney.

It localises to the cell membrane. Its subcellular location is the early endosome. It carries out the reaction Mg(2+)(in) = Mg(2+)(out). Acts as a selective Mg(2+) transporter. The protein is Magnesium transporter NIPA2 (Nipa2) of Mus musculus (Mouse).